Consider the following 604-residue polypeptide: Elongation factor 4 (604 aa).

Positions 8-190 (DKIRNFSIIA…AIVNRLPPPR (183 aa)) constitute a tr-type G domain. Residues 20-25 (DHGKST) and 137-140 (NKID) contribute to the GTP site.

The protein belongs to the TRAFAC class translation factor GTPase superfamily. Classic translation factor GTPase family. LepA subfamily.

The protein resides in the cell inner membrane. It carries out the reaction GTP + H2O = GDP + phosphate + H(+). Required for accurate and efficient protein synthesis under certain stress conditions. May act as a fidelity factor of the translation reaction, by catalyzing a one-codon backward translocation of tRNAs on improperly translocated ribosomes. Back-translocation proceeds from a post-translocation (POST) complex to a pre-translocation (PRE) complex, thus giving elongation factor G a second chance to translocate the tRNAs correctly. Binds to ribosomes in a GTP-dependent manner. The protein is Elongation factor 4 of Hyphomonas neptunium (strain ATCC 15444).